Here is a 104-residue protein sequence, read N- to C-terminus: Iron-sulfur cluster assembly protein CyaY (104 aa).

Belongs to the frataxin family.

In terms of biological role, involved in iron-sulfur (Fe-S) cluster assembly. May act as a regulator of Fe-S biogenesis. The protein is Iron-sulfur cluster assembly protein CyaY of Aeromonas salmonicida (strain A449).